The following is a 541-amino-acid chain: Chaperonin GroEL (541 aa).

Residues 29–32 (TLGP), 86–90 (DGTTT), Gly413, 476–478 (NAA), and Asp492 each bind ATP.

This sequence belongs to the chaperonin (HSP60) family. In terms of assembly, forms a cylinder of 14 subunits composed of two heptameric rings stacked back-to-back. Interacts with the co-chaperonin GroES.

Its subcellular location is the cytoplasm. The enzyme catalyses ATP + H2O + a folded polypeptide = ADP + phosphate + an unfolded polypeptide.. Its function is as follows. Together with its co-chaperonin GroES, plays an essential role in assisting protein folding. The GroEL-GroES system forms a nano-cage that allows encapsulation of the non-native substrate proteins and provides a physical environment optimized to promote and accelerate protein folding. The polypeptide is Chaperonin GroEL (Rhodococcus hoagii (Corynebacterium equii)).